Reading from the N-terminus, the 175-residue chain is Flagellar assembly factor FliW (175 aa).

This sequence belongs to the FliW family. In terms of assembly, interacts with translational regulator CsrA and flagellin(s).

It localises to the cytoplasm. In terms of biological role, acts as an anti-CsrA protein, binds CsrA and prevents it from repressing translation of its target genes, one of which is flagellin. Binds to flagellin and participates in the assembly of the flagellum. This is Flagellar assembly factor FliW from Bdellovibrio bacteriovorus (strain ATCC 15356 / DSM 50701 / NCIMB 9529 / HD100).